A 153-amino-acid chain; its full sequence is Prostaglandin E synthase (153 aa).

Residues 1-13 lie on the Lumenal side of the membrane; the sequence is MPPSGLELMNGQV. Residues 14-42 form a helical membrane-spanning segment; the sequence is LPAFLLCSALLVIKMYVVAVITGQVRLRK. Arg39 is a binding site for glutathione. The Cytoplasmic portion of the chain corresponds to 43 to 61; it reads KAFANPEDAQRHGGLQYCR. A helical transmembrane segment spans residues 62–91; sequence NDPDVERCLRAHRNDMETIYPFLFLGFVYS. 74–78 contacts glutathione; sequence RNDME. Residues 92–96 are Lumenal-facing; the sequence is FLGPN. The helical transmembrane segment at 97–120 threads the bilayer; sequence PFVARMHFLVFFLGRMVHTVAYLG. Glutathione-binding residues include His114 and Tyr118. The Cytoplasmic segment spans residues 121–124; that stretch reads KLRA. The chain crosses the membrane as a helical span at residues 125 to 153; it reads PTRSLAYTLAQLPCASMALQIVWEAARHL. 127–131 lines the glutathione pocket; sequence RSLAY.

This sequence belongs to the MAPEG family. As to quaternary structure, homotrimer. Requires glutathione as cofactor.

The protein resides in the membrane. It is found in the cytoplasm. It localises to the perinuclear region. The catalysed reaction is prostaglandin H2 = prostaglandin E2. It carries out the reaction 2-glyceryl-prostaglandin H2 = 2-glyceryl-prostaglandin E2. It catalyses the reaction prostaglandin G2 = (15S)-15-hydroperoxy-prostaglandin E2. The enzyme catalyses 1-chloro-2,4-dinitrobenzene + glutathione = 2,4-dinitrophenyl-S-glutathione + chloride + H(+). The catalysed reaction is (5S)-hydroperoxy-(6E,8Z,11Z,14Z)-eicosatetraenoate + 2 glutathione = (5S)-hydroxy-(6E,8Z,11Z,14Z)-eicosatetraenoate + glutathione disulfide + H2O. The protein operates within lipid metabolism; prostaglandin biosynthesis. In terms of biological role, terminal enzyme of the cyclooxygenase (COX)-2-mediated prostaglandin E2 (PGE2) biosynthetic pathway. Catalyzes the glutathione-dependent oxidoreduction of prostaglandin endoperoxide H2 (PGH2) to prostaglandin E2 (PGE2) in response to inflammatory stimuli. Plays a key role in inflammation response, fever and pain. Also catalyzes the oxidoreduction of endocannabinoids into prostaglandin glycerol esters and PGG2 into 15-hydroperoxy-PGE2. In addition, displays low glutathione transferase and glutathione-dependent peroxidase activities, toward 1-chloro-2,4-dinitrobenzene and 5-hydroperoxyicosatetraenoic acid (5-HPETE), respectively. This Bos taurus (Bovine) protein is Prostaglandin E synthase (PTGES).